The sequence spans 148 residues: Lysozyme C (148 aa).

The first 18 residues, 1-18, serve as a signal peptide directing secretion; it reads MKALIILGLVLLSVTVQG. The C-type lysozyme domain maps to 19–148; the sequence is KIFERCELAR…VSQYVEGCGV (130 aa). Disulfide bonds link cysteine 24–cysteine 146, cysteine 48–cysteine 134, cysteine 83–cysteine 99, and cysteine 95–cysteine 113. Active-site residues include glutamate 53 and aspartate 71.

Belongs to the glycosyl hydrolase 22 family. Monomer.

The catalysed reaction is Hydrolysis of (1-&gt;4)-beta-linkages between N-acetylmuramic acid and N-acetyl-D-glucosamine residues in a peptidoglycan and between N-acetyl-D-glucosamine residues in chitodextrins.. Lysozymes have primarily a bacteriolytic function; those in tissues and body fluids are associated with the monocyte-macrophage system and enhance the activity of immunoagents. The chain is Lysozyme C (LYZ) from Colobus angolensis (Angolan colobus).